We begin with the raw amino-acid sequence, 227 residues long: Cytochrome c oxidase subunit 2 (227 aa).

Residues 1–14 (MAHAVQYGFQDAAA) lie on the Mitochondrial intermembrane side of the membrane. A helical membrane pass occupies residues 15 to 45 (PIMEELLYFHDHTLMIVFMISSLVLYIISLM). The Mitochondrial matrix segment spans residues 46–59 (LSTELTHTSTMDAQ). A helical membrane pass occupies residues 60–87 (EVETVWTILPAVILILIALPSLRILYMM). Topologically, residues 88–227 (DEIETPSLTL…YFEEWLLKTL (140 aa)) are mitochondrial intermembrane. Residues histidine 161, cysteine 196, glutamate 198, cysteine 200, histidine 204, and methionine 207 each coordinate Cu cation. A Mg(2+)-binding site is contributed by glutamate 198. Tyrosine 218 carries the post-translational modification Phosphotyrosine.

The protein belongs to the cytochrome c oxidase subunit 2 family. Component of the cytochrome c oxidase (complex IV, CIV), a multisubunit enzyme composed of 14 subunits. The complex is composed of a catalytic core of 3 subunits MT-CO1, MT-CO2 and MT-CO3, encoded in the mitochondrial DNA, and 11 supernumerary subunits COX4I, COX5A, COX5B, COX6A, COX6B, COX6C, COX7A, COX7B, COX7C, COX8 and NDUFA4, which are encoded in the nuclear genome. The complex exists as a monomer or a dimer and forms supercomplexes (SCs) in the inner mitochondrial membrane with NADH-ubiquinone oxidoreductase (complex I, CI) and ubiquinol-cytochrome c oxidoreductase (cytochrome b-c1 complex, complex III, CIII), resulting in different assemblies (supercomplex SCI(1)III(2)IV(1) and megacomplex MCI(2)III(2)IV(2)). Found in a complex with TMEM177, COA6, COX18, COX20, SCO1 and SCO2. Interacts with TMEM177 in a COX20-dependent manner. Interacts with COX20. Interacts with COX16. It depends on Cu cation as a cofactor.

The protein resides in the mitochondrion inner membrane. The enzyme catalyses 4 Fe(II)-[cytochrome c] + O2 + 8 H(+)(in) = 4 Fe(III)-[cytochrome c] + 2 H2O + 4 H(+)(out). Its function is as follows. Component of the cytochrome c oxidase, the last enzyme in the mitochondrial electron transport chain which drives oxidative phosphorylation. The respiratory chain contains 3 multisubunit complexes succinate dehydrogenase (complex II, CII), ubiquinol-cytochrome c oxidoreductase (cytochrome b-c1 complex, complex III, CIII) and cytochrome c oxidase (complex IV, CIV), that cooperate to transfer electrons derived from NADH and succinate to molecular oxygen, creating an electrochemical gradient over the inner membrane that drives transmembrane transport and the ATP synthase. Cytochrome c oxidase is the component of the respiratory chain that catalyzes the reduction of oxygen to water. Electrons originating from reduced cytochrome c in the intermembrane space (IMS) are transferred via the dinuclear copper A center (CU(A)) of subunit 2 and heme A of subunit 1 to the active site in subunit 1, a binuclear center (BNC) formed by heme A3 and copper B (CU(B)). The BNC reduces molecular oxygen to 2 water molecules using 4 electrons from cytochrome c in the IMS and 4 protons from the mitochondrial matrix. The chain is Cytochrome c oxidase subunit 2 (MT-CO2) from Galago senegalensis (Northern lesser bushbaby).